A 476-amino-acid chain; its full sequence is Aspartyl/glutamyl-tRNA(Asn/Gln) amidotransferase subunit B (476 aa).

Belongs to the GatB/GatE family. GatB subfamily. In terms of assembly, heterotrimer of A, B and C subunits.

It carries out the reaction L-glutamyl-tRNA(Gln) + L-glutamine + ATP + H2O = L-glutaminyl-tRNA(Gln) + L-glutamate + ADP + phosphate + H(+). The catalysed reaction is L-aspartyl-tRNA(Asn) + L-glutamine + ATP + H2O = L-asparaginyl-tRNA(Asn) + L-glutamate + ADP + phosphate + 2 H(+). Functionally, allows the formation of correctly charged Asn-tRNA(Asn) or Gln-tRNA(Gln) through the transamidation of misacylated Asp-tRNA(Asn) or Glu-tRNA(Gln) in organisms which lack either or both of asparaginyl-tRNA or glutaminyl-tRNA synthetases. The reaction takes place in the presence of glutamine and ATP through an activated phospho-Asp-tRNA(Asn) or phospho-Glu-tRNA(Gln). In Lactobacillus acidophilus (strain ATCC 700396 / NCK56 / N2 / NCFM), this protein is Aspartyl/glutamyl-tRNA(Asn/Gln) amidotransferase subunit B.